The primary structure comprises 133 residues: Nickel-responsive regulator (133 aa).

Positions 76, 87, 89, and 95 each coordinate Ni(2+).

The protein belongs to the transcriptional regulatory CopG/NikR family. Homotetramer. Ni(2+) serves as cofactor.

In terms of biological role, transcriptional repressor of the nikABCDE operon. Is active in the presence of excessive concentrations of intracellular nickel. This Enterobacter sp. (strain 638) protein is Nickel-responsive regulator.